Reading from the N-terminus, the 237-residue chain is Uridylate kinase (237 aa).

ATP is bound at residue 11–14; it reads KLSG. Gly-53 is a binding site for UMP. ATP is bound by residues Gly-54 and Arg-58. UMP-binding positions include Asp-73 and 134–141; that span reads TGNPFFTT. Positions 161, 167, and 170 each coordinate ATP.

It belongs to the UMP kinase family. Homohexamer.

Its subcellular location is the cytoplasm. It carries out the reaction UMP + ATP = UDP + ADP. Its pathway is pyrimidine metabolism; CTP biosynthesis via de novo pathway; UDP from UMP (UMPK route): step 1/1. Inhibited by UTP. Catalyzes the reversible phosphorylation of UMP to UDP. The sequence is that of Uridylate kinase from Burkholderia cenocepacia (strain HI2424).